Consider the following 2769-residue polypeptide: Teneurin-4 (2769 aa).

A compositionally biased stretch (basic and acidic residues) spans 1–22 (MDVKERKPYRSLTRRRDAERRY). The disordered stretch occupies residues 1-45 (MDVKERKPYRSLTRRRDAERRYTSSSADSEEGKAPQKSYSSSETL). The Teneurin N-terminal domain maps to 1–341 (MDVKERKPYR…KPSKYCNWKC (341 aa)). Residues 1–345 (MDVKERKPYR…YCNWKCAALS (345 aa)) are Cytoplasmic-facing. The residue at position 124 (serine 124) is a Phosphoserine. Residues 130–233 (RLWGRSTRSG…PPAGGAQEPA (104 aa)) form a disordered region. The segment covering 134 to 155 (RSTRSGRSSCLSSRANSNLTLT) has biased composition (low complexity). The span at 156-166 (DTEHENTETDH) shows a compositional bias: basic and acidic residues. Position 178 is a phosphothreonine (threonine 178). The segment covering 187–211 (HTPNQHHAASINSLNRGNFTPRSNP) has biased composition (polar residues). The helical transmembrane segment at 346–366 (AIVISATLVILLAYFVAMHLF) threads the bilayer. At 367-2769 (GLNWHLQPME…FMRQSEMGRR (2403 aa)) the chain is on the extracellular side. The tract at residues 400-426 (PSGGTGLETPDRKGKGTTEGKPSSFFP) is disordered. Residues 408 to 417 (TPDRKGKGTT) are compositionally biased toward basic and acidic residues. The N-linked (GlcNAc...) asparagine glycan is linked to asparagine 467. The interval 507-526 (ARSLEGTPRQSRGTVPPSSH) is disordered. Over residues 514–526 (PRQSRGTVPPSSH) the composition is skewed to polar residues. EGF-like domains lie at 562–593 (SVDN…PDCG), 594–624 (RASC…AECD), 626–658 (PTNQ…ESCE), 659–690 (EVDC…TNCE), 692–725 (PRAT…HDCS), 726–757 (IEIC…ACDQ), 758–787 (RACH…EHCT), and 788–831 (IAHY…AGCD). 22 disulfide bridges follow: cysteine 566-cysteine 576, cysteine 570-cysteine 581, cysteine 583-cysteine 592, cysteine 601-cysteine 612, cysteine 614-cysteine 623, cysteine 630-cysteine 641, cysteine 635-cysteine 646, cysteine 648-cysteine 657, cysteine 662-cysteine 673, cysteine 667-cysteine 678, cysteine 680-cysteine 689, cysteine 700-cysteine 713, cysteine 715-cysteine 724, cysteine 729-cysteine 739, cysteine 733-cysteine 744, cysteine 746-cysteine 755, cysteine 760-cysteine 770, cysteine 764-cysteine 775, cysteine 777-cysteine 786, cysteine 800-cysteine 810, cysteine 804-cysteine 819, and cysteine 821-cysteine 830. N-linked (GlcNAc...) asparagine glycans are attached at residues asparagine 940 and asparagine 1259. NHL repeat units follow at residues 1216 to 1259 (SCPS…PSGN), 1264 to 1308 (LELR…IKST), 1334 to 1378 (TRCG…NGII), 1393 to 1444 (LSCD…VAGR), and 1523 to 1566 (CFSG…IRKN). Residues 1576–1595 (YELSSPIDQELYLFDTTGKH) form a YD 1 repeat. Asparagine 1609 is a glycosylation site (N-linked (GlcNAc...) asparagine). YD repeat units follow at residues 1612 to 1632 (YTGD…VNVR), 1675 to 1694 (YHGN…WTTF), and 1695 to 1717 (YEYD…SSFR). N-linked (GlcNAc...) asparagine glycans are attached at residues asparagine 1705, asparagine 1741, asparagine 1799, and asparagine 1884. YD repeat units lie at residues 1887–1906 (YSPG…ERME), 1928–1946 (YLEK…YIFE), 1947–1967 (FDKN…QTLE), 1974–1991 (YYRN…VIQD), 1992–2013 (FTED…VIYK), 2014–2031 (YGKL…TKVS), 2034–2054 (YDET…FTCT), 2057–2077 (YRQI…EGMV), 2085–2104 (YDNS…TPLP), 2110–2127 (YDDV…GVIY), 2128–2154 (YDIN…MKEV), 2156–2169 (YEIF…MTVQ), 2170–2193 (YDNM…TRYS), 2196–2216 (YDAD…WRYS), 2217–2237 (YDLN…LTPL), 2239–2259 (YDIR…DEDG), 2271–2291 (YNSA…SVRY), and 2293–2313 (YDGL…LQFF). Residue asparagine 1985 is glycosylated (N-linked (GlcNAc...) asparagine). A glycan (N-linked (GlcNAc...) asparagine) is linked at asparagine 2188. Asparagine 2328 is a glycosylation site (N-linked (GlcNAc...) asparagine). Residues 2339–2380 (YDLQGHLFAMELSSGDEFYIACDNIGTPLAVFSGTGLMIKQI) form a YD 23 repeat. The N-linked (GlcNAc...) asparagine glycan is linked to asparagine 2646.

It belongs to the tenascin family. Teneurin subfamily. As to quaternary structure, homodimer; disulfide-linked. May also form heterodimer with either TENM1 or TENM2 or TENM3.

It is found in the cell membrane. It localises to the cell projection. The protein localises to the nucleus. Its subcellular location is the cytoplasm. Functionally, involved in neural development, regulating the establishment of proper connectivity within the nervous system. Plays a role in the establishment of the anterior-posterior axis during gastrulation. Regulates the differentiation and cellular process formation of oligodendrocytes and myelination of small-diameter axons in the central nervous system (CNS). Promotes activation of focal adhesion kinase. May function as a cellular signal transducer. The sequence is that of Teneurin-4 (TENM4) from Homo sapiens (Human).